We begin with the raw amino-acid sequence, 342 residues long: Uroporphyrinogen decarboxylase (342 aa).

Substrate contacts are provided by residues 26–30, D76, Y150, S205, and H321; that span reads RQAGR.

The protein belongs to the uroporphyrinogen decarboxylase family. Homodimer.

The protein localises to the cytoplasm. The catalysed reaction is uroporphyrinogen III + 4 H(+) = coproporphyrinogen III + 4 CO2. Its pathway is porphyrin-containing compound metabolism; protoporphyrin-IX biosynthesis; coproporphyrinogen-III from 5-aminolevulinate: step 4/4. Catalyzes the decarboxylation of four acetate groups of uroporphyrinogen-III to yield coproporphyrinogen-III. The polypeptide is Uroporphyrinogen decarboxylase (Sphingopyxis alaskensis (strain DSM 13593 / LMG 18877 / RB2256) (Sphingomonas alaskensis)).